A 351-amino-acid chain; its full sequence is Divinyl chlorophyll a/b light-harvesting protein PcbA (351 aa).

The next 6 helical transmembrane spans lie at 27–47, 64–84, 89–109, 202–222, 242–262, and 305–325; these read FIAA…AFTL, LIAL…GTFV, VTAI…GGLL, VMGG…FHIA, AILS…AFWC, and LTNV…WHAL.

This sequence belongs to the PsbB/PsbC family. IsiA/Pcb subfamily. In terms of assembly, the antenna complex consists of divinyl chlorophylls (a and b) and divinyl chlorophyll a/b binding proteins and binds more divinyl chlorophyll b than does the antenna complex from high-light-adapted Prochlorococcus. The cofactor is divinyl chlorophyll a. Requires divinyl chlorophyll b as cofactor.

It is found in the cellular thylakoid membrane. The antenna complex functions as a light receptor, it captures and delivers excitation energy to photosystems II and I. The Prochlorales pcb genes are not related to higher plant LHCs. This is Divinyl chlorophyll a/b light-harvesting protein PcbA (pcbA) from Prochlorococcus marinus (strain SARG / CCMP1375 / SS120).